The following is a 403-amino-acid chain: CCA-adding enzyme (403 aa).

ATP is bound by residues Gly-32 and Arg-35. CTP is bound by residues Gly-32 and Arg-35. 2 residues coordinate Mg(2+): Asp-45 and Asp-47. Residues Arg-116, Asp-159, Arg-162, Arg-165, and Arg-168 each coordinate ATP. CTP contacts are provided by Arg-116, Asp-159, Arg-162, Arg-165, and Arg-168.

This sequence belongs to the tRNA nucleotidyltransferase/poly(A) polymerase family. Bacterial CCA-adding enzyme type 3 subfamily. Homodimer. Requires Mg(2+) as cofactor.

It catalyses the reaction a tRNA precursor + 2 CTP + ATP = a tRNA with a 3' CCA end + 3 diphosphate. The enzyme catalyses a tRNA with a 3' CCA end + 2 CTP + ATP = a tRNA with a 3' CCACCA end + 3 diphosphate. Functionally, catalyzes the addition and repair of the essential 3'-terminal CCA sequence in tRNAs without using a nucleic acid template. Adds these three nucleotides in the order of C, C, and A to the tRNA nucleotide-73, using CTP and ATP as substrates and producing inorganic pyrophosphate. tRNA 3'-terminal CCA addition is required both for tRNA processing and repair. Also involved in tRNA surveillance by mediating tandem CCA addition to generate a CCACCA at the 3' terminus of unstable tRNAs. While stable tRNAs receive only 3'-terminal CCA, unstable tRNAs are marked with CCACCA and rapidly degraded. The sequence is that of CCA-adding enzyme from Streptococcus suis (strain 98HAH33).